The sequence spans 390 residues: S-adenosylmethionine synthase 3 (390 aa).

Glutamate 9 is a binding site for Mg(2+). Histidine 15 is a binding site for ATP. Position 43 (glutamate 43) interacts with K(+). Positions 56 and 99 each coordinate L-methionine. ATP is bound by residues 167–169 (DGK), 235–238 (SGRF), aspartate 246, 252–253 (RK), alanine 269, lysine 273, and lysine 277. An L-methionine-binding site is contributed by aspartate 246. Position 277 (lysine 277) interacts with L-methionine.

The protein belongs to the AdoMet synthase family. In terms of assembly, homotetramer. Mn(2+) is required as a cofactor. It depends on Mg(2+) as a cofactor. The cofactor is Co(2+). K(+) serves as cofactor. As to expression, mostly expressed in stems and leaves.

The protein resides in the cytoplasm. It carries out the reaction L-methionine + ATP + H2O = S-adenosyl-L-methionine + phosphate + diphosphate. It functions in the pathway amino-acid biosynthesis; S-adenosyl-L-methionine biosynthesis; S-adenosyl-L-methionine from L-methionine: step 1/1. Catalyzes the formation of S-adenosylmethionine from methionine and ATP. The reaction comprises two steps that are both catalyzed by the same enzyme: formation of S-adenosylmethionine (AdoMet) and triphosphate, and subsequent hydrolysis of the triphosphate. This is S-adenosylmethionine synthase 3 (SAM3) from Solanum lycopersicum (Tomato).